We begin with the raw amino-acid sequence, 112 residues long: Large ribosomal subunit protein eL30 (112 aa).

The protein belongs to the eukaryotic ribosomal protein eL30 family.

The protein is Large ribosomal subunit protein eL30 (RPL30) of Zea mays (Maize).